Reading from the N-terminus, the 187-residue chain is UPF0340 protein SPT_0687 (187 aa).

It belongs to the UPF0340 family.

The chain is UPF0340 protein SPT_0687 from Streptococcus pneumoniae (strain Taiwan19F-14).